Consider the following 357-residue polypeptide: Putative electron transport protein YccM (357 aa).

Residues 1–36 are Cytoplasmic-facing; that stretch reads MAENKRTRWQRRPGTTGGKLPWNDWRNATTWRKATQ. Residues 37–54 traverse the membrane as a helical segment; sequence LLLLAMNIYIAITFWYWV. Over 55–91 the chain is Periplasmic; it reads RYYETASSTTFVARPGGIEGWLPIAGLMNLKYSLVTG. The chain crosses the membrane as a helical span at residues 92-114; the sequence is QLPSVHAAAMLLLVAFIVISLLL. Residues 115–158 are Cytoplasmic-facing; the sequence is KKAFCSWLCPVGTLSELIGDLGNKLFGRQCVLPRWLDIPLRGVK. A helical membrane pass occupies residues 159 to 181; the sequence is YLLLSFFIYIALLMPAQAIHYFM. Residues 182–195 are Periplasmic-facing; that stretch reads LSPYSVVMDVKMLD. A helical transmembrane segment spans residues 196-218; it reads FFRHMGTATLISVTVLLIASLFI. At 219-309 the chain is on the cytoplasmic side; sequence RHAWCRYLCP…KPAANKKAFA (91 aa). 4Fe-4S ferredoxin-type domains lie at 242–270 and 269–299; these read FKIR…VDKL and KLIQ…FSLQ. [4Fe-4S] cluster is bound by residues Cys-251, Cys-254, Cys-257, Cys-261, Cys-278, Cys-281, Cys-284, and Cys-288. A helical transmembrane segment spans residues 310 to 332; it reads LSGWLMTLLVLGIMFAVIGYAMY. Topologically, residues 333–357 are periplasmic; that stretch reads AGVWQSPVPEELYRRLIPQAPMIGH.

The protein localises to the cell inner membrane. This is Putative electron transport protein YccM (yccM) from Escherichia coli (strain K12).